Here is a 435-residue protein sequence, read N- to C-terminus: Gamma-glutamyl phosphate reductase (435 aa).

This sequence belongs to the gamma-glutamyl phosphate reductase family.

It is found in the cytoplasm. It catalyses the reaction L-glutamate 5-semialdehyde + phosphate + NADP(+) = L-glutamyl 5-phosphate + NADPH + H(+). The protein operates within amino-acid biosynthesis; L-proline biosynthesis; L-glutamate 5-semialdehyde from L-glutamate: step 2/2. Catalyzes the NADPH-dependent reduction of L-glutamate 5-phosphate into L-glutamate 5-semialdehyde and phosphate. The product spontaneously undergoes cyclization to form 1-pyrroline-5-carboxylate. This chain is Gamma-glutamyl phosphate reductase, found in Nostoc punctiforme (strain ATCC 29133 / PCC 73102).